The sequence spans 255 residues: MAVISMKQLLEAGVHFGHQTRRWNPKMAKYIFTERNGIHVIDLQQTVKLADQAYEFVRDAAANDAVILFVGTKKQAAEAVADEATRAGQYFINHRWLGGTLTNWGTIQKRIARLKEIKRMEEEGTFDVLPKKEVALLNKQRARLEKFLGGIEDMPRIPDVMYVVDPHKEQIAVKEAKKLGIPVVAMVDTNADPDDIDIIIPANDDAIRAVKLITAKLADAIIEGRQGEDADVAFEADTQADSIEDIVEVVEGDNA.

Belongs to the universal ribosomal protein uS2 family.

This Streptococcus pyogenes serotype M3 (strain ATCC BAA-595 / MGAS315) protein is Small ribosomal subunit protein uS2.